A 383-amino-acid chain; its full sequence is 8-amino-7-oxononanoate synthase (383 aa).

Arg-21 provides a ligand contact to substrate. 108 to 109 (GY) lines the pyridoxal 5'-phosphate pocket. His-133 is a binding site for substrate. Pyridoxal 5'-phosphate contacts are provided by Ser-179, His-207, and Thr-233. Lys-236 bears the N6-(pyridoxal phosphate)lysine mark. Thr-350 contributes to the substrate binding site.

The protein belongs to the class-II pyridoxal-phosphate-dependent aminotransferase family. BioF subfamily. Homodimer. Pyridoxal 5'-phosphate is required as a cofactor.

It carries out the reaction 6-carboxyhexanoyl-[ACP] + L-alanine + H(+) = (8S)-8-amino-7-oxononanoate + holo-[ACP] + CO2. Its pathway is cofactor biosynthesis; biotin biosynthesis. Functionally, catalyzes the decarboxylative condensation of pimeloyl-[acyl-carrier protein] and L-alanine to produce 8-amino-7-oxononanoate (AON), [acyl-carrier protein], and carbon dioxide. The protein is 8-amino-7-oxononanoate synthase of Yersinia pestis bv. Antiqua (strain Angola).